We begin with the raw amino-acid sequence, 1857 residues long: U3 small nucleolar RNA-associated protein 10 (1857 aa).

A helical membrane pass occupies residues 267-287 (LTAYSIISVLSSLVPLSADLV). One copy of the HEAT repeat lies at 1817 to 1855 (LIPYIAELLEDDDEEVELEVRNGLVRVIENVLGEPLDRY).

This sequence belongs to the HEATR1/UTP10 family. Component of the ribosomal small subunit (SSU) processome.

It is found in the nucleus. The protein localises to the nucleolus. Its subcellular location is the membrane. Functionally, involved in nucleolar processing of pre-18S ribosomal RNA. Involved in ribosome biosynthesis. The chain is U3 small nucleolar RNA-associated protein 10 from Debaryomyces hansenii (strain ATCC 36239 / CBS 767 / BCRC 21394 / JCM 1990 / NBRC 0083 / IGC 2968) (Yeast).